Consider the following 318-residue polypeptide: Glutathione synthetase (318 aa).

Residues 129-314 (KLAITEFPDL…VPEMFAVALE (186 aa)) enclose the ATP-grasp domain. An ATP-binding site is contributed by 155-211 (HAAQGDVIVKPLDDMGGTGIFRLQRSEPNLNAILETLTDNGTRTIMAQRYIPEIVKG). Mg(2+) contacts are provided by Glu285 and Asn287.

Belongs to the prokaryotic GSH synthase family. It depends on Mg(2+) as a cofactor. Requires Mn(2+) as cofactor.

It carries out the reaction gamma-L-glutamyl-L-cysteine + glycine + ATP = glutathione + ADP + phosphate + H(+). The protein operates within sulfur metabolism; glutathione biosynthesis; glutathione from L-cysteine and L-glutamate: step 2/2. The chain is Glutathione synthetase from Bordetella pertussis (strain Tohama I / ATCC BAA-589 / NCTC 13251).